The following is a 1417-amino-acid chain: Cytoadherence-linked asexual protein 3.1 (1417 aa).

An N-terminal signal peptide occupies residues 1-24 (MVSFFKTPIFILIIFLYLNEKVIC). 4 cysteine pairs are disulfide-bonded: Cys-333–Cys-361, Cys-407–Cys-413, Cys-517–Cys-545, and Cys-521–Cys-542. Residues 1204-1224 (LANGFMYAFCFFAISQMYAYF) traverse the membrane as a helical segment. The segment at 1383–1417 (TYIDTEKMNEADSADSDDEKDSDTPDDELMISRFH) is disordered. Over residues 1394 to 1411 (DSADSDDEKDSDTPDDEL) the composition is skewed to acidic residues.

Self-associates. Component of the RhopH complex. RhopH complex is at least composed of CLAG3.1/CLAG3.2, RhopH2 and RhopH3 with a 1:1:1 subunit stoichiometry. CLAG3.1/CLAG3.2 mediates subunit association through independent contacts with RhopH2 and RhopH3, which do not directly interact with one another. Interacts with RhopH2. Interacts with RhopH3.

Its subcellular location is the host cell membrane. It localises to the host cytoplasm. The protein localises to the cytoplasmic vesicle. The protein resides in the secretory vesicle. It is found in the rhoptry. In terms of biological role, participates in the formation of new permeability pathways in Plasmodium-infected erythrocytes enabling the uptake of nutrients from the blood plasma. This is Cytoadherence-linked asexual protein 3.1 from Plasmodium falciparum.